A 597-amino-acid polypeptide reads, in one-letter code: Protein kinase C-like 3 (597 aa).

In terms of domain architecture, PB1 spans 12–95 (DIKLKTRFHG…AELNIHVFVG (84 aa)). Residues 127-177 (GHRFQGKRLNRRIQCFICHDYIWGIGRQGFRCVDCRLCVHKKCHRHVRTHC) form a Phorbol-ester/DAG-type zinc finger. The tract at residues 181–238 (PQGPNVPVAPSSGVGSLRGGRLDTSSSTTRSGGGIDNGAFHEHEIESPGSAKDMSRST) is disordered. The Protein kinase domain maps to 253–522 (FRLLTVIGRG…LNDMKEHDFF (270 aa)). Residues 259–267 (IGRGSYAKV) and K282 each bind ATP. D377 functions as the Proton acceptor in the catalytic mechanism. The region spanning 524-595 (GFIDWEALEQ…VNPLQMSRED (72 aa)) is the AGC-kinase C-terminal domain.

Belongs to the protein kinase superfamily. AGC Ser/Thr protein kinase family. PKC subfamily. In terms of assembly, interaction with par-3 required for the peripheral localization of par-6 and to form a par-3/par-6/pkc-3 complex, which is activated when cdc-42 interacts with par-6. Binds avidly to the phosphotyrosine interaction domain (PID) of a novel pkc-3 adapter protein num-1, which enables tethering and targeting of pkc-3 to the cell periphery. Mg(2+) serves as cofactor.

It localises to the cytoplasm. It is found in the cytoskeleton. The catalysed reaction is L-seryl-[protein] + ATP = O-phospho-L-seryl-[protein] + ADP + H(+). It carries out the reaction L-threonyl-[protein] + ATP = O-phospho-L-threonyl-[protein] + ADP + H(+). Functionally, required for the normal progression of embryogenesis and viability of the organism. Plays an indispensable role in establishing embryonic polarity and in recruiting and maintaining par-6 to the periphery, through interaction with par-3. Required for epithelial cell polarity in the distal spermatheca. Phosphorylates serine residues of num-1. Required for the expression of antimicrobial peptide nlp-29 in response in response to fungal infection or physical injury. The chain is Protein kinase C-like 3 from Caenorhabditis briggsae.